Consider the following 282-residue polypeptide: ATP phosphoribosyltransferase (282 aa).

It belongs to the ATP phosphoribosyltransferase family. Long subfamily. It depends on Mg(2+) as a cofactor.

The protein localises to the cytoplasm. The catalysed reaction is 1-(5-phospho-beta-D-ribosyl)-ATP + diphosphate = 5-phospho-alpha-D-ribose 1-diphosphate + ATP. The protein operates within amino-acid biosynthesis; L-histidine biosynthesis; L-histidine from 5-phospho-alpha-D-ribose 1-diphosphate: step 1/9. Feedback inhibited by histidine. Functionally, catalyzes the condensation of ATP and 5-phosphoribose 1-diphosphate to form N'-(5'-phosphoribosyl)-ATP (PR-ATP). Has a crucial role in the pathway because the rate of histidine biosynthesis seems to be controlled primarily by regulation of HisG enzymatic activity. In Pyrobaculum aerophilum (strain ATCC 51768 / DSM 7523 / JCM 9630 / CIP 104966 / NBRC 100827 / IM2), this protein is ATP phosphoribosyltransferase.